A 92-amino-acid polypeptide reads, in one-letter code: Acylphosphatase (92 aa).

The Acylphosphatase-like domain maps to 3–90; the sequence is RVHVLVAGRV…GEFTEFAVLR (88 aa). Catalysis depends on residues R18 and N36.

This sequence belongs to the acylphosphatase family.

The enzyme catalyses an acyl phosphate + H2O = a carboxylate + phosphate + H(+). The protein is Acylphosphatase (acyP) of Methylococcus capsulatus (strain ATCC 33009 / NCIMB 11132 / Bath).